The following is a 243-amino-acid chain: 1-(5-phosphoribosyl)-5-[(5-phosphoribosylamino)methylideneamino] imidazole-4-carboxamide isomerase (243 aa).

Asp-8 (proton acceptor) is an active-site residue. Asp-129 serves as the catalytic Proton donor.

This sequence belongs to the HisA/HisF family.

It is found in the cytoplasm. It carries out the reaction 1-(5-phospho-beta-D-ribosyl)-5-[(5-phospho-beta-D-ribosylamino)methylideneamino]imidazole-4-carboxamide = 5-[(5-phospho-1-deoxy-D-ribulos-1-ylimino)methylamino]-1-(5-phospho-beta-D-ribosyl)imidazole-4-carboxamide. It functions in the pathway amino-acid biosynthesis; L-histidine biosynthesis; L-histidine from 5-phospho-alpha-D-ribose 1-diphosphate: step 4/9. This chain is 1-(5-phosphoribosyl)-5-[(5-phosphoribosylamino)methylideneamino] imidazole-4-carboxamide isomerase, found in Parvibaculum lavamentivorans (strain DS-1 / DSM 13023 / NCIMB 13966).